We begin with the raw amino-acid sequence, 346 residues long: Holliday junction branch migration complex subunit RuvB (346 aa).

Residues 1–181 form a large ATPase domain (RuvB-L) region; that stretch reads MSDRNPLIDA…FGIPVRLNFY (181 aa). Residues leucine 20, arginine 21, glycine 62, lysine 65, threonine 66, threonine 67, 128–130, arginine 171, tyrosine 181, and arginine 218 each bind ATP; that span reads EDF. Threonine 66 is a Mg(2+) binding site. Positions 182-252 are small ATPAse domain (RuvB-S); sequence TVEELEYIVR…IADEALSRLE (71 aa). The interval 255–346 is head domain (RuvB-H); sequence NRGLDQLDRR…SQYGLFMEDE (92 aa). Residues arginine 291, arginine 310, and arginine 315 each coordinate DNA.

It belongs to the RuvB family. As to quaternary structure, homohexamer. Forms an RuvA(8)-RuvB(12)-Holliday junction (HJ) complex. HJ DNA is sandwiched between 2 RuvA tetramers; dsDNA enters through RuvA and exits via RuvB. An RuvB hexamer assembles on each DNA strand where it exits the tetramer. Each RuvB hexamer is contacted by two RuvA subunits (via domain III) on 2 adjacent RuvB subunits; this complex drives branch migration. In the full resolvosome a probable DNA-RuvA(4)-RuvB(12)-RuvC(2) complex forms which resolves the HJ.

The protein localises to the cytoplasm. The enzyme catalyses ATP + H2O = ADP + phosphate + H(+). The RuvA-RuvB-RuvC complex processes Holliday junction (HJ) DNA during genetic recombination and DNA repair, while the RuvA-RuvB complex plays an important role in the rescue of blocked DNA replication forks via replication fork reversal (RFR). RuvA specifically binds to HJ cruciform DNA, conferring on it an open structure. The RuvB hexamer acts as an ATP-dependent pump, pulling dsDNA into and through the RuvAB complex. RuvB forms 2 homohexamers on either side of HJ DNA bound by 1 or 2 RuvA tetramers; 4 subunits per hexamer contact DNA at a time. Coordinated motions by a converter formed by DNA-disengaged RuvB subunits stimulates ATP hydrolysis and nucleotide exchange. Immobilization of the converter enables RuvB to convert the ATP-contained energy into a lever motion, pulling 2 nucleotides of DNA out of the RuvA tetramer per ATP hydrolyzed, thus driving DNA branch migration. The RuvB motors rotate together with the DNA substrate, which together with the progressing nucleotide cycle form the mechanistic basis for DNA recombination by continuous HJ branch migration. Branch migration allows RuvC to scan DNA until it finds its consensus sequence, where it cleaves and resolves cruciform DNA. This is Holliday junction branch migration complex subunit RuvB from Brucella suis (strain ATCC 23445 / NCTC 10510).